The sequence spans 111 residues: ASFAEAPAGDAKAGEKIFKTKCAZCHTVZKGAGHKQGPNLNGLFGRQSGTTAGYSYSAANKNKAVAWZZBSLYDYLLNPKKYIPGTKMVFPGLKKPZZRADLIAYLKASTA.

A1 is subject to N-acetylalanine. Heme c contacts are provided by C22, C25, and H26. At K80 the chain carries N6,N6,N6-trimethyllysine. A heme c-binding site is contributed by M88. N6,N6,N6-trimethyllysine is present on K94.

The protein belongs to the cytochrome c family. In terms of processing, binds 1 heme c group covalently per subunit.

Its subcellular location is the mitochondrion intermembrane space. Electron carrier protein. The oxidized form of the cytochrome c heme group can accept an electron from the heme group of the cytochrome c1 subunit of cytochrome reductase. Cytochrome c then transfers this electron to the cytochrome oxidase complex, the final protein carrier in the mitochondrial electron-transport chain. The sequence is that of Cytochrome c from Guizotia abyssinica (Niger).